The primary structure comprises 471 residues: 1,3-beta-glucanosyltransferase GAS4 (471 aa).

The signal sequence occupies residues 1-21 (MMVFSSTFIFLILELVVLCEA). A disulfide bond links Cys70 and Cys99. (1,3-beta-D-glucosyl)n is bound at residue Tyr88. N-linked (GlcNAc...) asparagine glycosylation is present at Asn151. (1,3-beta-D-glucosyl)n-binding residues include Asn160, Glu161, Asp203, and Arg208. The Proton donor role is filled by Glu161. Intrachain disulfides connect Cys217–Cys354 and Cys238–Cys269. Glu266 serves as the catalytic Nucleophile. Tyr298 serves as a coordination point for (1,3-beta-D-glucosyl)n. N-linked (GlcNAc...) asparagine glycosylation occurs at Asn398. Asn447 carries GPI-anchor amidated asparagine lipidation. The propeptide at 448 to 471 (SASISGPLLPLGLCLLFFTFSLFF) is removed in mature form.

Belongs to the glycosyl hydrolase 72 family.

The protein localises to the cell membrane. Functionally, splits internally a 1,3-beta-glucan molecule and transfers the newly generated reducing end (the donor) to the non-reducing end of another 1,3-beta-glucan molecule (the acceptor) forming a 1,3-beta linkage, resulting in the elongation of 1,3-beta-glucan chains in the cell wall. Involved in spore wall assembly. This is 1,3-beta-glucanosyltransferase GAS4 (GAS4) from Saccharomyces cerevisiae (strain ATCC 204508 / S288c) (Baker's yeast).